A 135-amino-acid polypeptide reads, in one-letter code: MACGLVASNLNLKPGECLKVRGEVAPDAKSFVLNLGKDSNNLCLHFNPRFDMHGDINTIVCNSKDGGAWGAEQRESAFPFQPGSVVEVCISFGQTDLTIKLPDGYEFSFPNRLNLEAIEHLAADGDFKIKCVAFE.

At alanine 2 the chain carries N-acetylalanine. The Galectin domain maps to 4-135 (GLVASNLNLK…DFKIKCVAFE (132 aa)). N6-acetyllysine occurs at positions 13, 19, and 29. Serine 30 carries the post-translational modification Phosphoserine. Residues 45–49 (HFNPR), histidine 53, asparagine 62, and 69–72 (WGAE) contribute to the a beta-D-galactoside site. N6-acetyllysine is present on lysine 128.

Homodimer. Binds LGALS3BP. Interacts with CD2, CD3, CD4, CD6, CD7, CD43, ALCAM and CD45. Interacts with laminin (via poly-N-acetyllactosamine). Interacts with SUSD2. Interacts with cargo receptor TMED10; the interaction mediates the translocation from the cytoplasm into the ERGIC (endoplasmic reticulum-Golgi intermediate compartment) and thereby secretion.

The protein resides in the secreted. It localises to the extracellular space. The protein localises to the extracellular matrix. It is found in the cytoplasm. In terms of biological role, lectin that binds beta-galactoside and a wide array of complex carbohydrates. Plays a role in regulating apoptosis, cell proliferation and cell differentiation. Inhibits CD45 protein phosphatase activity and therefore the dephosphorylation of Lyn kinase. Strong inducer of T-cell apoptosis. This is Galectin-1 (LGALS1) from Sus scrofa (Pig).